The following is a 655-amino-acid chain: 1-deoxy-D-xylulose-5-phosphate synthase (655 aa).

Residues H73 and 114–116 contribute to the thiamine diphosphate site; that span reads SHA. D145 lines the Mg(2+) pocket. Thiamine diphosphate is bound by residues 146-147, N174, Y285, and E367; that span reads GA. N174 serves as a coordination point for Mg(2+). A disordered region spans residues 626–655; it reads RQPAIEDDPTSPGEAAPAGERAGEAIGDQR. Over residues 646–655 the composition is skewed to basic and acidic residues; that stretch reads RAGEAIGDQR.

It belongs to the transketolase family. DXPS subfamily. In terms of assembly, homodimer. Requires Mg(2+) as cofactor. Thiamine diphosphate serves as cofactor.

The catalysed reaction is D-glyceraldehyde 3-phosphate + pyruvate + H(+) = 1-deoxy-D-xylulose 5-phosphate + CO2. The protein operates within metabolic intermediate biosynthesis; 1-deoxy-D-xylulose 5-phosphate biosynthesis; 1-deoxy-D-xylulose 5-phosphate from D-glyceraldehyde 3-phosphate and pyruvate: step 1/1. Its function is as follows. Catalyzes the acyloin condensation reaction between C atoms 2 and 3 of pyruvate and glyceraldehyde 3-phosphate to yield 1-deoxy-D-xylulose-5-phosphate (DXP). The polypeptide is 1-deoxy-D-xylulose-5-phosphate synthase (Frankia casuarinae (strain DSM 45818 / CECT 9043 / HFP020203 / CcI3)).